Consider the following 1183-residue polypeptide: DNA-directed RNA polymerase subunit beta (1183 aa).

This sequence belongs to the RNA polymerase beta chain family. The RNAP catalytic core consists of 2 alpha, 1 beta, 1 beta' and 1 omega subunit. When a sigma factor is associated with the core the holoenzyme is formed, which can initiate transcription.

The enzyme catalyses RNA(n) + a ribonucleoside 5'-triphosphate = RNA(n+1) + diphosphate. DNA-dependent RNA polymerase catalyzes the transcription of DNA into RNA using the four ribonucleoside triphosphates as substrates. This chain is DNA-directed RNA polymerase subunit beta, found in Staphylococcus aureus (strain COL).